The following is a 494-amino-acid chain: MKAENCCIVIFGASGDLTYRKLIPALYNLYKIDRLGEDFSVLGVARTELNDKSFREKMRQTLIKNEGAKGECLEQFCSHLYYQAVNTADKADYAKLVPRLDELHDTYRTEGNTLYYLSTPPSLYGVIPECLGEHGLNKEDRGWKRLIVEKPFGYDRETAEALDIQIHRFFEEHQIYRIDHYLGKETVQNLLVLRFSNGWFEPLWNRNFIDYIEITGAESIGVEERGGYYDGSGAMRDMFQNHLLQVLAMVAMEPPVIINANSMRDEVAKVLHCLRPLTQEDVEHNLVLGQYVAGEVDGEWVKGYLEEKGVPPYSTTETYMALRCEIENWRWAGVPFYVRTGKRLPARVTEIVIHFKTTPHPVFSQNAPENKLIIRIQPDEGISMRFGLKKPGAGFEAKEVSMDFRYADLAGATVMTAYERLLLDAMKGDATLFARTDAVHAAWKFVQPILNYKAQGGRLYDYEAGTWGPTAADKLIAKSGRVWRRPSGLMKKKV.

NADP(+) is bound by residues arginine 46 and lysine 150. Substrate-binding residues include histidine 180, lysine 184, glutamate 218, and aspartate 237. Residue histidine 242 is the Proton acceptor of the active site. Residue lysine 342 participates in substrate binding.

The protein belongs to the glucose-6-phosphate dehydrogenase family.

It carries out the reaction D-glucose 6-phosphate + NADP(+) = 6-phospho-D-glucono-1,5-lactone + NADPH + H(+). It functions in the pathway carbohydrate degradation; pentose phosphate pathway; D-ribulose 5-phosphate from D-glucose 6-phosphate (oxidative stage): step 1/3. In terms of biological role, catalyzes the oxidation of glucose 6-phosphate to 6-phosphogluconolactone. The chain is Glucose-6-phosphate 1-dehydrogenase from Aggregatibacter actinomycetemcomitans (Actinobacillus actinomycetemcomitans).